Consider the following 341-residue polypeptide: Heat-inducible transcription repressor HrcA (341 aa).

It belongs to the HrcA family.

Functionally, negative regulator of class I heat shock genes (grpE-dnaK-dnaJ and groELS operons). Prevents heat-shock induction of these operons. The sequence is that of Heat-inducible transcription repressor HrcA from Corynebacterium glutamicum (strain ATCC 13032 / DSM 20300 / JCM 1318 / BCRC 11384 / CCUG 27702 / LMG 3730 / NBRC 12168 / NCIMB 10025 / NRRL B-2784 / 534).